Here is a 364-residue protein sequence, read N- to C-terminus: Medium-wave-sensitive opsin 1 (364 aa).

Positions methionine 1–threonine 23 are disordered. At methionine 1–valine 52 the chain is on the extracellular side. Positions glutamate 17–proline 43 are required for 11-cis-retinal regeneration. Residue asparagine 34 is glycosylated (N-linked (GlcNAc...) asparagine). Residues tyrosine 53 to alanine 77 form a helical membrane-spanning segment. The Cytoplasmic portion of the chain corresponds to threonine 78–asparagine 89. The helical transmembrane segment at tryptophan 90–phenylalanine 115 threads the bilayer. The Extracellular portion of the chain corresponds to tyrosine 116 to glutamate 129. A disulfide bridge links cysteine 126 with cysteine 203. Residues glycine 130–tryptophan 149 traverse the membrane as a helical segment. The Cytoplasmic segment spans residues glutamate 150–leucine 168. Residues alanine 169–serine 192 traverse the membrane as a helical segment. The Extracellular segment spans residues arginine 193–serine 218. The helical transmembrane segment at tyrosine 219–isoleucine 246 threads the bilayer. Residues arginine 247–arginine 268 lie on the Cytoplasmic side of the membrane. Residues methionine 269–threonine 292 traverse the membrane as a helical segment. Over alanine 293–histidine 300 the chain is Extracellular. A helical transmembrane segment spans residues proline 301–methionine 325. Lysine 312 carries the post-translational modification N6-(retinylidene)lysine. Over asparagine 326–alanine 364 the chain is Cytoplasmic.

This sequence belongs to the G-protein coupled receptor 1 family. Opsin subfamily. In terms of assembly, monomer. Homodimer. Homotetramer. In terms of processing, O-glycosylated. Post-translationally, phosphorylated on some or all of the serine and threonine residues present in the C-terminal region. As to expression, expressed in cone photoreceptor cells.

The protein resides in the membrane. Its function is as follows. Visual pigments are the light-absorbing molecules that mediate vision. They consist of an apoprotein, opsin, covalently linked to cis-retinal. May increase spectral sensitivity in dim light. The polypeptide is Medium-wave-sensitive opsin 1 (OPN1MW) (Oryctolagus cuniculus (Rabbit)).